The following is a 275-amino-acid chain: MRNTVSTFQELKNKGEKITMLTAYDYSMAKLIDSSGINGILVGDSLGMVCLGYENTLSVTMEDMLHHTKAVVRGTSNALVVGDMPFMSYQTSIYDAVYNAGRFIKEAGAHAVKLEGGATVAEEIKAIVKAQIPVMGHIGLTPQSVNMFGGFKVQGKNEKVAKKLIEDAKILEEAGAFAIVLECIPEKLSKIISESISIPTIGIGAGKYCDGQILVYQDMLSMFSDFKPKFVKSFGSIGESIKDGVSQYIKEVKEAKFPEEKHAFKIDDDVINKLY.

Residues aspartate 44 and aspartate 83 each contribute to the Mg(2+) site. 3-methyl-2-oxobutanoate-binding positions include 44–45 (DS), aspartate 83, and lysine 113. Glutamate 115 contacts Mg(2+). Glutamate 182 functions as the Proton acceptor in the catalytic mechanism.

The protein belongs to the PanB family. In terms of assembly, homodecamer; pentamer of dimers. Mg(2+) is required as a cofactor.

It localises to the cytoplasm. The catalysed reaction is 3-methyl-2-oxobutanoate + (6R)-5,10-methylene-5,6,7,8-tetrahydrofolate + H2O = 2-dehydropantoate + (6S)-5,6,7,8-tetrahydrofolate. It participates in cofactor biosynthesis; (R)-pantothenate biosynthesis; (R)-pantoate from 3-methyl-2-oxobutanoate: step 1/2. Its function is as follows. Catalyzes the reversible reaction in which hydroxymethyl group from 5,10-methylenetetrahydrofolate is transferred onto alpha-ketoisovalerate to form ketopantoate. The chain is 3-methyl-2-oxobutanoate hydroxymethyltransferase from Clostridium botulinum (strain Loch Maree / Type A3).